Here is a 422-residue protein sequence, read N- to C-terminus: UDP-N-acetylmuramoylalanine--D-glutamate ligase (422 aa).

102-108 (GTNGKTT) contributes to the ATP binding site.

This sequence belongs to the MurCDEF family.

It localises to the cytoplasm. It catalyses the reaction UDP-N-acetyl-alpha-D-muramoyl-L-alanine + D-glutamate + ATP = UDP-N-acetyl-alpha-D-muramoyl-L-alanyl-D-glutamate + ADP + phosphate + H(+). It functions in the pathway cell wall biogenesis; peptidoglycan biosynthesis. Its function is as follows. Cell wall formation. Catalyzes the addition of glutamate to the nucleotide precursor UDP-N-acetylmuramoyl-L-alanine (UMA). The protein is UDP-N-acetylmuramoylalanine--D-glutamate ligase of Helicobacter pylori (strain ATCC 700392 / 26695) (Campylobacter pylori).